The chain runs to 1058 residues: MDNNQIPKNSPESSAINSAESSPKSNVSSDVLHENHHKEQQQLQQQLQQEQQQQQLPTTPQSEPTQRVNNNEEGIEMDRIAENSNINVPSDVGESSLKTISGYPSSKNTEAGSSSSGKKEEDYNYRSTWVPKLHQELFENPEVLESRRTKQRASNYRKTLEREKEGIKPLDNILEELKANANGLTKAEAQKRLEEVGPNAIPDVKRYPILEFLYFMWNPLSWTMEVAAIVSIALLDWVDFILICALLLLNATIGFIEENTAGNAVEALKNSLVSQIRCMRDGEWVMLPSPDLVPGDVVMLKIGAIIPADCRVIEAEQVKIDQSSLTGESLPVTKKIGDEVYSGSAMKQGEAKCVVTATGVNTFFGRAANLVQETEGHGHLQVILRNIGLFCISFIAIWVLVELLVDFLGYDGYCHGVGGGRCLPLNNALVLLVGGIPIAMPTVLSVTMAIGATQLSKKKAIVSRLASIEELAAMDILCSDKTGTLTLNILTVDEPLPVGDTPKEDIVFHAFLACSEGEDQDAIDKAISNYCRDTYPNVDYSGNEIVKHYPFNPEDKKAMGLVNANGKQFKTAKGAPQIILREADNYKQVGEAVEKEIENLADRGYRALGVSVSYDAPDFKVWHFEGLIPLFDPPRHDTEDTIKRALEMGVSVKMITGDQLAIAKETARRLGMGGNLFTIPYLENNDLGISEGEVIEMADGFAEMWPEHKYKVVDQLQKRKHVVGMTGDGVNDAPALKKAQIGIAVAGATDAARSVSDIVLTSSGLSVIIDAIISSRKIFQRMRNYVIYSVAATVRICTTFGILTVAWNFKFPTIATVIIAILNDGTMLTISKDRVRARNEPDQWNLFEVFTMALCYGFYLVGSTIVFFAIIHDGTWFHDAINLRILTDNELRGLIYLQVSISGLATIFVSRSQGFSYFERPGNLVIFAFVMSQIVATFIGVYGFRGYPHDSFSDNPDYPVHGTNFQGCGWGWAVCAWIWCFLWYIPMDFIKLGVTYILRGKIEPINKDALRKIYGWFGKEIPKEATQVSHKVAEQQAKRDALHAQETHHKSVVTDNKV.

Over residues 1-29 (MDNNQIPKNSPESSAINSAESSPKSNVSS) the composition is skewed to polar residues. The segment at 1 to 123 (MDNNQIPKNS…SSSGKKEEDY (123 aa)) is disordered. Residues 1-212 (MDNNQIPKNS…DVKRYPILEF (212 aa)) are Cytoplasmic-facing. Residues 31–40 (VLHENHHKEQ) show a composition bias toward basic and acidic residues. The span at 41–66 (QQLQQQLQQEQQQQQLPTTPQSEPTQ) shows a compositional bias: low complexity. Polar residues predominate over residues 96–111 (SLKTISGYPSSKNTEA). The chain crosses the membrane as a helical span at residues 213–232 (LYFMWNPLSWTMEVAAIVSI). Over 233–237 (ALLDW) the chain is Extracellular. The chain crosses the membrane as a helical span at residues 238 to 258 (VDFILICALLLLNATIGFIEE). Topologically, residues 259–387 (NTAGNAVEAL…GHLQVILRNI (129 aa)) are cytoplasmic. A helical membrane pass occupies residues 388–407 (GLFCISFIAIWVLVELLVDF). Topologically, residues 408 to 425 (LGYDGYCHGVGGGRCLPL) are extracellular. The chain crosses the membrane as a helical span at residues 426 to 447 (NNALVLLVGGIPIAMPTVLSVT). The Cytoplasmic segment spans residues 448–783 (MAIGATQLSK…SSRKIFQRMR (336 aa)). Catalysis depends on D480, which acts as the 4-aspartylphosphate intermediate. Mg(2+) is bound by residues D728 and D732. A helical transmembrane segment spans residues 784–805 (NYVIYSVAATVRICTTFGILTV). Topologically, residues 806-810 (AWNFK) are extracellular. The chain crosses the membrane as a helical span at residues 811 to 833 (FPTIATVIIAILNDGTMLTISKD). The Cytoplasmic portion of the chain corresponds to 834 to 849 (RVRARNEPDQWNLFEV). The helical transmembrane segment at 850-870 (FTMALCYGFYLVGSTIVFFAI) threads the bilayer. Topologically, residues 871-889 (IHDGTWFHDAINLRILTDN) are extracellular. Residues 890–910 (ELRGLIYLQVSISGLATIFVS) form a helical membrane-spanning segment. Residues 911–922 (RSQGFSYFERPG) lie on the Cytoplasmic side of the membrane. The chain crosses the membrane as a helical span at residues 923-943 (NLVIFAFVMSQIVATFIGVYG). The Extracellular portion of the chain corresponds to 944 to 967 (FRGYPHDSFSDNPDYPVHGTNFQG). The chain crosses the membrane as a helical span at residues 968–988 (CGWGWAVCAWIWCFLWYIPMD). The Cytoplasmic segment spans residues 989 to 1058 (FIKLGVTYIL…HKSVVTDNKV (70 aa)).

It belongs to the cation transport ATPase (P-type) (TC 3.A.3) family. Type IIIA subfamily.

It localises to the cell membrane. The enzyme catalyses ATP + H2O + H(+)(in) = ADP + phosphate + 2 H(+)(out). Acid pH levels increase its ATPase activity. In terms of biological role, P-type plasma membrane H+-ATPase (proton pump). The proton gradient it generates drives the active transport of nutrients by H(+) symport. The resulting external acidification and/or internal alkinization may mediate growth responses. This chain is Probable plasma membrane ATPase (patB), found in Dictyostelium discoideum (Social amoeba).